The sequence spans 158 residues: Crossover junction endodeoxyribonuclease RuvC (158 aa).

Active-site residues include D7, E67, and D140. Mg(2+) is bound by residues D7, E67, and D140.

Belongs to the RuvC family. In terms of assembly, homodimer which binds Holliday junction (HJ) DNA. The HJ becomes 2-fold symmetrical on binding to RuvC with unstacked arms; it has a different conformation from HJ DNA in complex with RuvA. In the full resolvosome a probable DNA-RuvA(4)-RuvB(12)-RuvC(2) complex forms which resolves the HJ. Requires Mg(2+) as cofactor.

The protein resides in the cytoplasm. The catalysed reaction is Endonucleolytic cleavage at a junction such as a reciprocal single-stranded crossover between two homologous DNA duplexes (Holliday junction).. Functionally, the RuvA-RuvB-RuvC complex processes Holliday junction (HJ) DNA during genetic recombination and DNA repair. Endonuclease that resolves HJ intermediates. Cleaves cruciform DNA by making single-stranded nicks across the HJ at symmetrical positions within the homologous arms, yielding a 5'-phosphate and a 3'-hydroxyl group; requires a central core of homology in the junction. The consensus cleavage sequence is 5'-(A/T)TT(C/G)-3'. Cleavage occurs on the 3'-side of the TT dinucleotide at the point of strand exchange. HJ branch migration catalyzed by RuvA-RuvB allows RuvC to scan DNA until it finds its consensus sequence, where it cleaves and resolves the cruciform DNA. The sequence is that of Crossover junction endodeoxyribonuclease RuvC from Dictyoglomus thermophilum (strain ATCC 35947 / DSM 3960 / H-6-12).